The primary structure comprises 287 residues: Damage-control phosphatase PH1575 (287 aa).

The short motif at 7-10 (CLTC) is the Subfamily I CxxC motif element. D156, N157, and D191 together coordinate Mn(2+). Positions 243-246 (GNFE) match the Subfamily I GNFE motif motif. The Subfamily I KC motif motif lies at 263-264 (KC).

It belongs to the damage-control phosphatase family. Nucleotides phosphatase I subfamily. Requires Mn(2+) as cofactor. Ni(2+) is required as a cofactor. [2Fe-2S] cluster serves as cofactor.

With respect to regulation, activity is strongly promoted by Co(2+), Ni(2+), Mg(2+), Mn(2+), Ca(2+), Zn(2+) and Cu(2+). Activity is inhibited by EDTA. Functionally, metal-dependent phosphatase with probable damage-control functions. Shows phosphatase activity against p-nitrophenyl phosphate (pNPP), but natural substrates have not been identified yet. Low phosphatase activity against 8-oxo nucleotides suggests that it could hydrolyze oxidatively damaged purine nucleotides or their biosynthetic intermediates. This Pyrococcus horikoshii (strain ATCC 700860 / DSM 12428 / JCM 9974 / NBRC 100139 / OT-3) protein is Damage-control phosphatase PH1575.